A 72-amino-acid chain; its full sequence is Large ribosomal subunit protein bL28 (72 aa).

It belongs to the bacterial ribosomal protein bL28 family.

This chain is Large ribosomal subunit protein bL28, found in Chlorobium luteolum (strain DSM 273 / BCRC 81028 / 2530) (Pelodictyon luteolum).